A 1482-amino-acid chain; its full sequence is Type VII secretion system protein EssC (1482 aa).

Over 1-229 (MHKLIIKYNK…RPPQPIQKNN (229 aa)) the chain is Cytoplasmic. A helical membrane pass occupies residues 230–252 (TVIWRSIIPPLVMIALTVVIFLV). The Extracellular segment spans residues 253–256 (RPIG). Residues 257-279 (IYILMMIGMSTVTIVFGITTYFS) form a helical membrane-spanning segment. Residues 280–1482 (EKKKYNKDVE…EYQKIKLMEG (1203 aa)) are Cytoplasmic-facing. FtsK domains are found at residues 652-846 (DDIL…QDSN) and 997-1183 (QGPM…NELT). ATP is bound by residues 672–679 (GTTGSGKS) and 1014–1021 (GSPGYGRT).

This sequence belongs to the EssC family. As to quaternary structure, homooligomer. Interacts with EsaE.

The protein resides in the cell membrane. Functionally, component of the type VII secretion system (Ess). Required for the secretion of substrates including EsxA and EsxB. However, unable to support secretion of the substrate protein EsxC. This is Type VII secretion system protein EssC from Staphylococcus aureus (strain MRSA252).